Reading from the N-terminus, the 164-residue chain is Ecotin (164 aa).

Positions 1 to 20 are cleaved as a signal peptide; the sequence is MKMFVPAVVFAALASASAWA. Cys72 and Cys109 are disulfide-bonded.

Belongs to the protease inhibitor I11 (ecotin) family. As to quaternary structure, homodimer.

Its subcellular location is the periplasm. Its function is as follows. General inhibitor of pancreatic serine proteases: inhibits chymotrypsin, trypsin, elastases, factor X, kallikrein as well as a variety of other proteases. This chain is Ecotin, found in Salmonella enteritidis PT4 (strain P125109).